We begin with the raw amino-acid sequence, 317 residues long: Olfactory receptor 6Q1 (317 aa).

At 1 to 27 the chain is on the extracellular side; sequence MQPYTKNWTQVTEFVMMGFAGIHEAHL. Asn-7 is a glycosylation site (N-linked (GlcNAc...) asparagine). A helical transmembrane segment spans residues 28–48; that stretch reads LFFILFLTMYLFTLVENLAII. Residues 49–56 lie on the Cytoplasmic side of the membrane; that stretch reads LVVGLDHR. Residues 57 to 77 form a helical membrane-spanning segment; that stretch reads LRRPMYFFLTHLSCLEIWYTS. The Extracellular segment spans residues 78-103; it reads VTVPKMLAGFIGVDGGKNISYADCLS. An N-linked (GlcNAc...) asparagine glycan is attached at Asn-95. An intrachain disulfide couples Cys-101 to Cys-193. The chain crosses the membrane as a helical span at residues 104 to 124; the sequence is QLFIFTFLGATECFLLAAMAY. Topologically, residues 125-143 are cytoplasmic; sequence DRYVAICMPLHYGAFVSWG. A helical transmembrane segment spans residues 144-164; sequence TCIRLAAACWLVGFLTPILPI. Over 165-201 the chain is Extracellular; the sequence is YLLSQLTFYGPNVIDHFSCDASPLLALSCSDVTWKET. The helical transmembrane segment at 202-221 threads the bilayer; that stretch reads VDFLVSLAVLLASSMVIAVS. Over 222 to 241 the chain is Cytoplasmic; the sequence is YGNIVWTLLHIRSAAERWKA. The helical transmembrane segment at 242–262 threads the bilayer; sequence FSTCAAHLTVVSLFYGTLFFM. Residues 263 to 275 lie on the Extracellular side of the membrane; sequence YVQTKVTSSINFN. Residues 276–296 traverse the membrane as a helical segment; the sequence is KVVSVFYSVVTPMLNPLIYSL. Topologically, residues 297 to 317 are cytoplasmic; it reads RNKEVKGALGRVFSLNFWKGQ.

It belongs to the G-protein coupled receptor 1 family.

Its subcellular location is the cell membrane. Odorant receptor. The polypeptide is Olfactory receptor 6Q1 (OR6Q1) (Homo sapiens (Human)).